The sequence spans 175 residues: uncharacterized protein (175 aa).

Residues 1 to 22 (MNRIVGILISILMLACIGVTMA) form the signal peptide.

This is an uncharacterized protein from Archaeoglobus fulgidus (strain ATCC 49558 / DSM 4304 / JCM 9628 / NBRC 100126 / VC-16).